The primary structure comprises 246 residues: Bis(5'-nucleosyl)-tetraphosphatase PrpE [asymmetrical] (246 aa).

Belongs to the PrpE family. Ni(2+) serves as cofactor.

It catalyses the reaction P(1),P(4)-bis(5'-guanosyl) tetraphosphate + H2O = GMP + GTP + 2 H(+). Functionally, asymmetrically hydrolyzes Ap4p to yield AMP and ATP. This Bacillus thuringiensis subsp. konkukian (strain 97-27) protein is Bis(5'-nucleosyl)-tetraphosphatase PrpE [asymmetrical].